The sequence spans 301 residues: Acetylglutamate kinase (301 aa).

Substrate contacts are provided by residues 68–69, Arg90, and Asn195; that span reads GG.

Belongs to the acetylglutamate kinase family. ArgB subfamily.

The protein resides in the cytoplasm. It carries out the reaction N-acetyl-L-glutamate + ATP = N-acetyl-L-glutamyl 5-phosphate + ADP. The protein operates within amino-acid biosynthesis; L-arginine biosynthesis; N(2)-acetyl-L-ornithine from L-glutamate: step 2/4. Its function is as follows. Catalyzes the ATP-dependent phosphorylation of N-acetyl-L-glutamate. The sequence is that of Acetylglutamate kinase from Pseudomonas paraeruginosa (strain DSM 24068 / PA7) (Pseudomonas aeruginosa (strain PA7)).